We begin with the raw amino-acid sequence, 792 residues long: Endonuclease MutS2 (792 aa).

ATP is bound at residue 335-342 (GPNTGGKT). Residues 717 to 792 (VDLRGLNLEE…GAGVTIVKLK (76 aa)) form the Smr domain.

The protein belongs to the DNA mismatch repair MutS family. MutS2 subfamily. As to quaternary structure, homodimer. Binds to stalled ribosomes, contacting rRNA.

Its function is as follows. Endonuclease that is involved in the suppression of homologous recombination and thus may have a key role in the control of bacterial genetic diversity. Functionally, acts as a ribosome collision sensor, splitting the ribosome into its 2 subunits. Detects stalled/collided 70S ribosomes which it binds and splits by an ATP-hydrolysis driven conformational change. Acts upstream of the ribosome quality control system (RQC), a ribosome-associated complex that mediates the extraction of incompletely synthesized nascent chains from stalled ribosomes and their subsequent degradation. Probably generates substrates for RQC. This Clostridioides difficile (strain 630) (Peptoclostridium difficile) protein is Endonuclease MutS2.